A 548-amino-acid polypeptide reads, in one-letter code: ATP synthase subunit alpha (548 aa).

Residue 172–179 coordinates ATP; it reads GDRKTGKT. The segment at 526 to 548 is disordered; sequence AEAMDEADVEKESVKVRKPAPKK.

This sequence belongs to the ATPase alpha/beta chains family. In terms of assembly, F-type ATPases have 2 components, CF(1) - the catalytic core - and CF(0) - the membrane proton channel. CF(1) has five subunits: alpha(3), beta(3), gamma(1), delta(1), epsilon(1). CF(0) has three main subunits: a(1), b(2) and c(9-12). The alpha and beta chains form an alternating ring which encloses part of the gamma chain. CF(1) is attached to CF(0) by a central stalk formed by the gamma and epsilon chains, while a peripheral stalk is formed by the delta and b chains.

It is found in the cell membrane. It catalyses the reaction ATP + H2O + 4 H(+)(in) = ADP + phosphate + 5 H(+)(out). Its function is as follows. Produces ATP from ADP in the presence of a proton gradient across the membrane. The alpha chain is a regulatory subunit. The chain is ATP synthase subunit alpha from Mycolicibacterium gilvum (strain PYR-GCK) (Mycobacterium gilvum (strain PYR-GCK)).